A 459-amino-acid polypeptide reads, in one-letter code: tRNA modification GTPase MnmE (459 aa).

(6S)-5-formyl-5,6,7,8-tetrahydrofolate-binding residues include Arg-20, Glu-85, and Arg-124. A TrmE-type G domain is found at 221 to 380 (GLSTVIIGRP…LEEAIQSLFY (160 aa)). Asn-231 provides a ligand contact to K(+). Residues 231–236 (NVGKSS), 250–256 (TDIPGTT), and 275–278 (DTAG) contribute to the GTP site. Mg(2+) is bound at residue Ser-235. Residues Thr-250, Ile-252, and Thr-255 each coordinate K(+). Thr-256 contributes to the Mg(2+) binding site. A (6S)-5-formyl-5,6,7,8-tetrahydrofolate-binding site is contributed by Lys-459.

This sequence belongs to the TRAFAC class TrmE-Era-EngA-EngB-Septin-like GTPase superfamily. TrmE GTPase family. Homodimer. Heterotetramer of two MnmE and two MnmG subunits. K(+) is required as a cofactor.

The protein localises to the cytoplasm. Functionally, exhibits a very high intrinsic GTPase hydrolysis rate. Involved in the addition of a carboxymethylaminomethyl (cmnm) group at the wobble position (U34) of certain tRNAs, forming tRNA-cmnm(5)s(2)U34. The chain is tRNA modification GTPase MnmE from Bacillus velezensis (strain DSM 23117 / BGSC 10A6 / LMG 26770 / FZB42) (Bacillus amyloliquefaciens subsp. plantarum).